We begin with the raw amino-acid sequence, 165 residues long: Nucleotide-binding protein Chy400_2003 (165 aa).

Belongs to the YajQ family.

Functionally, nucleotide-binding protein. The chain is Nucleotide-binding protein Chy400_2003 from Chloroflexus aurantiacus (strain ATCC 29364 / DSM 637 / Y-400-fl).